The sequence spans 327 residues: Pyruvate dehydrogenase E1 component subunit beta (327 aa).

Thiamine diphosphate is bound at residue Glu60. K(+)-binding residues include Ile113, Ala161, Ile162, and Asn166.

Heterodimer of an alpha and a beta chain. Thiamine diphosphate is required as a cofactor.

It is found in the plastid. Its subcellular location is the chloroplast. It catalyses the reaction N(6)-[(R)-lipoyl]-L-lysyl-[protein] + pyruvate + H(+) = N(6)-[(R)-S(8)-acetyldihydrolipoyl]-L-lysyl-[protein] + CO2. Its function is as follows. The pyruvate dehydrogenase complex catalyzes the overall conversion of pyruvate to acetyl-CoA and CO(2). It contains multiple copies of three enzymatic components: pyruvate dehydrogenase (E1), dihydrolipoamide acetyltransferase (E2) and lipoamide dehydrogenase (E3). The sequence is that of Pyruvate dehydrogenase E1 component subunit beta (pdhB) from Mesostigma viride (Green alga).